The chain runs to 386 residues: Innexin inx4 (386 aa).

The Cytoplasmic segment spans residues 1–21 (MLEFVRPLQSILQIKQVNSTD). The chain crosses the membrane as a helical span at residues 22–42 (LVWRLHCRVTVFLLLLASLLL). The Extracellular segment spans residues 43-111 (SARQYFGNPI…ESERSYQKYY (69 aa)). A helical transmembrane segment spans residues 112-132 (QWVVFILALQACMFSVPNFLW). The Cytoplasmic segment spans residues 133–187 (KAWEAGRLQSLCDGLTTPIVPDHWEKTRKKQLITYLSADFPRLHRTYLLRYCFCT). The chain crosses the membrane as a helical span at residues 188-208 (LLNFCNVLLNIFLVNVIFSGF). Residues 209-272 (WSNYHPAVKA…LNVVNEKIFA (64 aa)) lie on the Extracellular side of the membrane. Residues 273-293 (FIWLWFLGLLVISMLNLLFWI) traverse the membrane as a helical segment. Topologically, residues 294–386 (VVLCSKGFRL…DPEGYDEEGV (93 aa)) are cytoplasmic. The interval 358–386 (HNGHKTFRMPKGGEPDFYTDPEGYDEEGV) is disordered. Residues 374–386 (FYTDPEGYDEEGV) show a composition bias toward acidic residues.

Belongs to the pannexin family.

It is found in the cell membrane. The protein resides in the cell junction. Its subcellular location is the gap junction. Its function is as follows. Structural component of gap junctions. Required for normal development of ovary. Required for normal egg production after blood meal. Required for normal development of testis. (Microbial infection) Modulates the development of Plasmodium falciparum oocysts. The polypeptide is Innexin inx4 (Anopheles gambiae (African malaria mosquito)).